Consider the following 200-residue polypeptide: Large ribosomal subunit protein uL4 (200 aa).

The segment at 43–65 is disordered; sequence RAQKTRSEVSGGGAKPWRQKGTG.

This sequence belongs to the universal ribosomal protein uL4 family. In terms of assembly, part of the 50S ribosomal subunit.

Functionally, one of the primary rRNA binding proteins, this protein initially binds near the 5'-end of the 23S rRNA. It is important during the early stages of 50S assembly. It makes multiple contacts with different domains of the 23S rRNA in the assembled 50S subunit and ribosome. Its function is as follows. Forms part of the polypeptide exit tunnel. This Aliivibrio salmonicida (strain LFI1238) (Vibrio salmonicida (strain LFI1238)) protein is Large ribosomal subunit protein uL4.